A 304-amino-acid chain; its full sequence is Porphobilinogen deaminase (304 aa).

An S-(dipyrrolylmethanemethyl)cysteine modification is found at Cys240.

The protein belongs to the HMBS family. As to quaternary structure, monomer. Dipyrromethane serves as cofactor.

It catalyses the reaction 4 porphobilinogen + H2O = hydroxymethylbilane + 4 NH4(+). The protein operates within porphyrin-containing compound metabolism; protoporphyrin-IX biosynthesis; coproporphyrinogen-III from 5-aminolevulinate: step 2/4. Functionally, tetrapolymerization of the monopyrrole PBG into the hydroxymethylbilane pre-uroporphyrinogen in several discrete steps. The protein is Porphobilinogen deaminase of Xanthomonas axonopodis pv. citri (strain 306).